Consider the following 230-residue polypeptide: Sugar fermentation stimulation protein homolog (230 aa).

This sequence belongs to the SfsA family.

The sequence is that of Sugar fermentation stimulation protein homolog from Clostridium perfringens (strain ATCC 13124 / DSM 756 / JCM 1290 / NCIMB 6125 / NCTC 8237 / Type A).